The chain runs to 345 residues: D-fructose 1,6-bisphosphatase class 2/sedoheptulose 1,7-bisphosphatase (345 aa).

Mn(2+) contacts are provided by aspartate 33, glutamate 57, aspartate 97, and glutamate 100. Substrate contacts are provided by residues 100 to 102 (EGT), tyrosine 131, 176 to 178 (RPR), and 198 to 200 (DGD). Glutamate 225 provides a ligand contact to Mn(2+).

Belongs to the FBPase class 2 family. As to quaternary structure, homotetramer. Mn(2+) is required as a cofactor.

It catalyses the reaction beta-D-fructose 1,6-bisphosphate + H2O = beta-D-fructose 6-phosphate + phosphate. It carries out the reaction D-sedoheptulose 1,7-bisphosphate + H2O = D-sedoheptulose 7-phosphate + phosphate. It participates in carbohydrate biosynthesis; Calvin cycle. Catalyzes the hydrolysis of fructose 1,6-bisphosphate (Fru 1,6-P2) and sedoheptulose 1,7-bisphosphate (Sed 1,7-P2) to fructose 6-phosphate and sedoheptulose 7-phosphate, respectively. This is D-fructose 1,6-bisphosphatase class 2/sedoheptulose 1,7-bisphosphatase from Trichodesmium erythraeum (strain IMS101).